Consider the following 84-residue polypeptide: Small ribosomal subunit protein bS20 (84 aa).

This sequence belongs to the bacterial ribosomal protein bS20 family.

Functionally, binds directly to 16S ribosomal RNA. This Bacteroides thetaiotaomicron (strain ATCC 29148 / DSM 2079 / JCM 5827 / CCUG 10774 / NCTC 10582 / VPI-5482 / E50) protein is Small ribosomal subunit protein bS20.